The following is a 252-amino-acid chain: 5'-nucleotidase SurE (252 aa).

A divalent metal cation-binding residues include aspartate 8, aspartate 9, serine 39, and asparagine 91.

Belongs to the SurE nucleotidase family. A divalent metal cation is required as a cofactor.

Its subcellular location is the cytoplasm. The catalysed reaction is a ribonucleoside 5'-phosphate + H2O = a ribonucleoside + phosphate. In terms of biological role, nucleotidase that shows phosphatase activity on nucleoside 5'-monophosphates. The sequence is that of 5'-nucleotidase SurE from Variovorax paradoxus (strain S110).